Consider the following 377-residue polypeptide: Succinyl-diaminopimelate desuccinylase (377 aa).

Residue histidine 67 coordinates Zn(2+). Residue aspartate 69 is part of the active site. Aspartate 100 is a binding site for Zn(2+). The active-site Proton acceptor is the glutamate 134. Zn(2+) is bound by residues glutamate 135, glutamate 163, and histidine 349.

Belongs to the peptidase M20A family. DapE subfamily. Homodimer. Requires Zn(2+) as cofactor. Co(2+) is required as a cofactor.

The catalysed reaction is N-succinyl-(2S,6S)-2,6-diaminopimelate + H2O = (2S,6S)-2,6-diaminopimelate + succinate. Its pathway is amino-acid biosynthesis; L-lysine biosynthesis via DAP pathway; LL-2,6-diaminopimelate from (S)-tetrahydrodipicolinate (succinylase route): step 3/3. In terms of biological role, catalyzes the hydrolysis of N-succinyl-L,L-diaminopimelic acid (SDAP), forming succinate and LL-2,6-diaminopimelate (DAP), an intermediate involved in the bacterial biosynthesis of lysine and meso-diaminopimelic acid, an essential component of bacterial cell walls. This is Succinyl-diaminopimelate desuccinylase from Buchnera aphidicola subsp. Baizongia pistaciae (strain Bp).